A 742-amino-acid chain; its full sequence is Polyribonucleotide nucleotidyltransferase (742 aa).

The Mg(2+) site is built by D515 and D521. Residues P581–V640 enclose the KH domain. The 73-residue stretch at G652–V724 folds into the S1 motif domain.

Belongs to the polyribonucleotide nucleotidyltransferase family. Mg(2+) is required as a cofactor.

The protein localises to the cytoplasm. The enzyme catalyses RNA(n+1) + phosphate = RNA(n) + a ribonucleoside 5'-diphosphate. Functionally, involved in mRNA degradation. Catalyzes the phosphorolysis of single-stranded polyribonucleotides processively in the 3'- to 5'-direction. The sequence is that of Polyribonucleotide nucleotidyltransferase from Nocardioides sp. (strain ATCC BAA-499 / JS614).